The following is a 162-amino-acid chain: UPF0262 protein HNE_1347 (162 aa).

The protein belongs to the UPF0262 family.

In Hyphomonas neptunium (strain ATCC 15444), this protein is UPF0262 protein HNE_1347.